Reading from the N-terminus, the 680-residue chain is DNA-directed RNA polymerase subunit beta' (680 aa).

Cys69, Cys71, Cys87, and Cys90 together coordinate Zn(2+). Residues Asp489, Asp491, and Asp493 each contribute to the Mg(2+) site.

Belongs to the RNA polymerase beta' chain family. RpoC1 subfamily. As to quaternary structure, in plastids the minimal PEP RNA polymerase catalytic core is composed of four subunits: alpha, beta, beta', and beta''. When a (nuclear-encoded) sigma factor is associated with the core the holoenzyme is formed, which can initiate transcription. It depends on Mg(2+) as a cofactor. Zn(2+) is required as a cofactor.

Its subcellular location is the plastid. The protein localises to the chloroplast. It carries out the reaction RNA(n) + a ribonucleoside 5'-triphosphate = RNA(n+1) + diphosphate. Functionally, DNA-dependent RNA polymerase catalyzes the transcription of DNA into RNA using the four ribonucleoside triphosphates as substrates. The polypeptide is DNA-directed RNA polymerase subunit beta' (Draba nemorosa (Woodland whitlowgrass)).